A 147-amino-acid polypeptide reads, in one-letter code: Phospholipase A2 inhibitor subunit A (147 aa).

Residues 62-143 form the C-type lectin domain; the sequence is EICEEAGGHI…DENLLVVCEF (82 aa). Intrachain disulfides connect cysteine 64-cysteine 141 and cysteine 119-cysteine 133. N-linked (GlcNAc...) asparagine glycosylation occurs at asparagine 103.

This sequence belongs to the alpha-type phospholipase A2 inhibitor family. As to quaternary structure, homo- or heterotrimer; homotrimer of PLI-A chains, two PLI-A and one PLI-B chains, one PLI-A and two PLI-B chains, and homotrimer of PLI-B chains (with a ratio of 1:3:3:1). In terms of tissue distribution, expressed by the liver.

The protein localises to the secreted. PLI binds directly phospholipase A2 in the presence or absence of calcium. Inhibitory activity of the PLI-A homotrimer is more specific than that of the PLI-B homotrimer. In Protobothrops flavoviridis (Habu), this protein is Phospholipase A2 inhibitor subunit A.